The sequence spans 185 residues: Peptidyl-tRNA hydrolase (185 aa).

Phe-14 is a tRNA binding site. His-19 serves as the catalytic Proton acceptor. Residues Tyr-64, Asn-66, and Asn-112 each contribute to the tRNA site.

The protein belongs to the PTH family. In terms of assembly, monomer.

It is found in the cytoplasm. The enzyme catalyses an N-acyl-L-alpha-aminoacyl-tRNA + H2O = an N-acyl-L-amino acid + a tRNA + H(+). Hydrolyzes ribosome-free peptidyl-tRNAs (with 1 or more amino acids incorporated), which drop off the ribosome during protein synthesis, or as a result of ribosome stalling. Functionally, catalyzes the release of premature peptidyl moieties from peptidyl-tRNA molecules trapped in stalled 50S ribosomal subunits, and thus maintains levels of free tRNAs and 50S ribosomes. The protein is Peptidyl-tRNA hydrolase of Exiguobacterium sp. (strain ATCC BAA-1283 / AT1b).